The chain runs to 276 residues: UPF0276 protein Caul_0757 (276 aa).

Belongs to the UPF0276 family.

This chain is UPF0276 protein Caul_0757, found in Caulobacter sp. (strain K31).